The sequence spans 106 residues: Large ribosomal subunit protein uL24 (106 aa).

This sequence belongs to the universal ribosomal protein uL24 family. As to quaternary structure, part of the 50S ribosomal subunit.

One of two assembly initiator proteins, it binds directly to the 5'-end of the 23S rRNA, where it nucleates assembly of the 50S subunit. Functionally, one of the proteins that surrounds the polypeptide exit tunnel on the outside of the subunit. This chain is Large ribosomal subunit protein uL24, found in Bordetella avium (strain 197N).